Reading from the N-terminus, the 252-residue chain is Triosephosphate isomerase (252 aa).

A substrate-binding site is contributed by Asn10–Lys12. His96 acts as the Electrophile in catalysis. Glu168 serves as the catalytic Proton acceptor. Substrate contacts are provided by residues Gly174, Ser213, and Gly234–Gly235.

The protein belongs to the triosephosphate isomerase family. In terms of assembly, homodimer.

The protein resides in the cytoplasm. It carries out the reaction D-glyceraldehyde 3-phosphate = dihydroxyacetone phosphate. It functions in the pathway carbohydrate biosynthesis; gluconeogenesis. Its pathway is carbohydrate degradation; glycolysis; D-glyceraldehyde 3-phosphate from glycerone phosphate: step 1/1. Its function is as follows. Involved in the gluconeogenesis. Catalyzes stereospecifically the conversion of dihydroxyacetone phosphate (DHAP) to D-glyceraldehyde-3-phosphate (G3P). In Nitrosomonas eutropha (strain DSM 101675 / C91 / Nm57), this protein is Triosephosphate isomerase.